Consider the following 246-residue polypeptide: Small ribosomal subunit protein uS2 (246 aa).

The tract at residues 226–246 (QGEEEAEVAEETAPETETTTA) is disordered. Over residues 229–239 (EEAEVAEETAP) the composition is skewed to acidic residues.

This sequence belongs to the universal ribosomal protein uS2 family. As to quaternary structure, part of the 30S ribosomal subunit. Interacts with BrxC.

The polypeptide is Small ribosomal subunit protein uS2 (rpsB) (Bacillus subtilis (strain 168)).